A 195-amino-acid chain; its full sequence is Xanthine phosphoribosyltransferase (195 aa).

Leu-20 and Asn-27 together coordinate xanthine. 128 to 132 (ANGQA) provides a ligand contact to 5-phospho-alpha-D-ribose 1-diphosphate. A xanthine-binding site is contributed by Lys-156.

Belongs to the purine/pyrimidine phosphoribosyltransferase family. Xpt subfamily. In terms of assembly, homodimer.

It is found in the cytoplasm. It catalyses the reaction XMP + diphosphate = xanthine + 5-phospho-alpha-D-ribose 1-diphosphate. It participates in purine metabolism; XMP biosynthesis via salvage pathway; XMP from xanthine: step 1/1. Converts the preformed base xanthine, a product of nucleic acid breakdown, to xanthosine 5'-monophosphate (XMP), so it can be reused for RNA or DNA synthesis. The sequence is that of Xanthine phosphoribosyltransferase from Lactiplantibacillus plantarum (strain ATCC BAA-793 / NCIMB 8826 / WCFS1) (Lactobacillus plantarum).